A 1219-amino-acid polypeptide reads, in one-letter code: DNA ligase 4 (1219 aa).

Residues Glu-251, Lys-253, Arg-258, Arg-273, Glu-303, Phe-342, Glu-418, Lys-423, Arg-434, Lys-440, and Lys-442 each coordinate ATP. The N6-AMP-lysine intermediate role is filled by Lys-253. Glu-303 is a binding site for Mg(2+). Glu-418 serves as a coordination point for Mg(2+). A disordered region spans residues 604–632 (NGTTQKQKESESTQDNPKVNKSSKRGEKK). 2 consecutive BRCT domains span residues 651–739 (GKTS…PKYF) and 807–909 (VYFY…VYTL). 2 disordered regions span residues 914-1126 (MEES…MDMK) and 1146-1197 (IPSQ…SDVV). Over residues 932-960 (VASQGSAQTKEPASSKIAITSSRGRSNTR) the composition is skewed to polar residues. The span at 1042-1051 (QRSRRGKKAA) shows a compositional bias: basic residues. Positions 1056–1065 (DESDENDELD) are enriched in acidic residues. Basic and acidic residues-rich tracts occupy residues 1084–1096 (VENE…DIAK) and 1117–1126 (RNAKTEMDMK). Positions 1148-1159 (SQKTTETSNRTT) are enriched in polar residues.

It belongs to the ATP-dependent DNA ligase family. Interacts with XRCC4 via its tandem BRCT domains. Interacts with POLL. Requires Mg(2+) as cofactor. Widely expressed, with higher levels in young flowers and roots.

It localises to the nucleus. It catalyses the reaction ATP + (deoxyribonucleotide)n-3'-hydroxyl + 5'-phospho-(deoxyribonucleotide)m = (deoxyribonucleotide)n+m + AMP + diphosphate.. Its function is as follows. DNA ligase involved in DNA non-homologous end joining (NHEJ); required for double-strand break (DSB) repair. May be involved for T-DNA integration even if not absolutely required. Seems to be dispensable under normal growth conditions. In Arabidopsis thaliana (Mouse-ear cress), this protein is DNA ligase 4 (LIG4).